A 232-amino-acid polypeptide reads, in one-letter code: RNA chaperone ProQ (232 aa).

The interval 105–182 (EAKARVQAQR…REEQHTPVSD (78 aa)) is disordered. Composition is skewed to basic and acidic residues over residues 117 to 138 (QQAK…PPRE) and 147 to 177 (RRKE…EEQH).

This sequence belongs to the ProQ family.

It is found in the cytoplasm. In terms of biological role, RNA chaperone with significant RNA binding, RNA strand exchange and RNA duplexing activities. May regulate ProP activity through an RNA-based, post-transcriptional mechanism. The sequence is that of RNA chaperone ProQ from Escherichia coli O139:H28 (strain E24377A / ETEC).